Consider the following 205-residue polypeptide: Holliday junction branch migration complex subunit RuvA (205 aa).

The segment at 1 to 64 (MIGRLRGVLI…EDAQLLYGFI (64 aa)) is domain I. Positions 65–143 (TKKERSLFRL…SLMEASVGSE (79 aa)) are domain II. Residues 144–156 (REFVLQSNYSPAP) form a flexible linker region. The interval 157 to 205 (TVNSAEEDAISALLSLGYKPPQASKAVSAAYKEGMDSETLIKAALKSML) is domain III.

This sequence belongs to the RuvA family. Homotetramer. Forms an RuvA(8)-RuvB(12)-Holliday junction (HJ) complex. HJ DNA is sandwiched between 2 RuvA tetramers; dsDNA enters through RuvA and exits via RuvB. An RuvB hexamer assembles on each DNA strand where it exits the tetramer. Each RuvB hexamer is contacted by two RuvA subunits (via domain III) on 2 adjacent RuvB subunits; this complex drives branch migration. In the full resolvosome a probable DNA-RuvA(4)-RuvB(12)-RuvC(2) complex forms which resolves the HJ.

It localises to the cytoplasm. The RuvA-RuvB-RuvC complex processes Holliday junction (HJ) DNA during genetic recombination and DNA repair, while the RuvA-RuvB complex plays an important role in the rescue of blocked DNA replication forks via replication fork reversal (RFR). RuvA specifically binds to HJ cruciform DNA, conferring on it an open structure. The RuvB hexamer acts as an ATP-dependent pump, pulling dsDNA into and through the RuvAB complex. HJ branch migration allows RuvC to scan DNA until it finds its consensus sequence, where it cleaves and resolves the cruciform DNA. The sequence is that of Holliday junction branch migration complex subunit RuvA from Shewanella sp. (strain MR-4).